The primary structure comprises 186 residues: T-cell receptor-associated transmembrane adapter 1 (186 aa).

Residues 1-7 (MSGISGC) are Extracellular-facing. The helical; Signal-anchor for type III membrane protein transmembrane segment at 8-28 (PFFLWGLLALLGLALVISLIF) threads the bilayer. Topologically, residues 29–186 (NISHYVEKQR…LIRAKREPIN (158 aa)) are cytoplasmic. Phosphoserine is present on Ser46. Tyr79 bears the Phosphotyrosine mark. Residues 79 to 82 (YEQM) are interaction with PIK3R1. The segment at 116–140 (SVKGKRRKPRKQNTHFSDKDGDEQL) is disordered. A compositionally biased stretch (basic residues) spans 118 to 128 (KGKRRKPRKQN). The span at 131–140 (FSDKDGDEQL) shows a compositional bias: basic and acidic residues.

As to quaternary structure, homodimer; disulfide-linked. Interacts with CD3Z. When phosphorylated, interacts with PIK3R1. In terms of processing, phosphorylated on tyrosines by LCK or FYN upon TCR activation. In terms of tissue distribution, strongly expressed in thymus, and to a lesser extent in spleen, lymph node and peripheral blood lymphocytes. Present in T-cells and NK cells, but not B-cells (at protein level).

It is found in the cell membrane. In terms of biological role, stabilizes the TCR (T-cell antigen receptor)/CD3 complex at the surface of T-cells. In Homo sapiens (Human), this protein is T-cell receptor-associated transmembrane adapter 1 (TRAT1).